Here is a 78-residue protein sequence, read N- to C-terminus: Leukemia-associated protein 1 (78 aa).

May act as a tumor suppressor. In Homo sapiens (Human), this protein is Leukemia-associated protein 1 (DLEU1).